Consider the following 954-residue polypeptide: Glycine dehydrogenase (decarboxylating) (954 aa).

Position 706 is an N6-(pyridoxal phosphate)lysine (K706).

The protein belongs to the GcvP family. As to quaternary structure, the glycine cleavage system is composed of four proteins: P, T, L and H. The cofactor is pyridoxal 5'-phosphate.

The enzyme catalyses N(6)-[(R)-lipoyl]-L-lysyl-[glycine-cleavage complex H protein] + glycine + H(+) = N(6)-[(R)-S(8)-aminomethyldihydrolipoyl]-L-lysyl-[glycine-cleavage complex H protein] + CO2. Its function is as follows. The glycine cleavage system catalyzes the degradation of glycine. The P protein binds the alpha-amino group of glycine through its pyridoxal phosphate cofactor; CO(2) is released and the remaining methylamine moiety is then transferred to the lipoamide cofactor of the H protein. In Pseudomonas syringae pv. syringae (strain B728a), this protein is Glycine dehydrogenase (decarboxylating).